We begin with the raw amino-acid sequence, 848 residues long: Adenylate cyclase (848 aa).

Residues 1 to 535 form a catalytic region; it reads MYLYIETLKQ…DVSHHFPLRL (535 aa). The regulatory stretch occupies residues 541-848; the sequence is KALYSPCEIR…DTPLLQQYFS (308 aa). His609 carries the phosphohistidine; by CRR modification.

Belongs to the adenylyl cyclase class-1 family.

It localises to the cytoplasm. It carries out the reaction ATP = 3',5'-cyclic AMP + diphosphate. The protein is Adenylate cyclase (cyaA) of Shigella flexneri.